Reading from the N-terminus, the 1052-residue chain is MEGSEPVAAHQGEEASCSSWGTGSTNKNLPIMSTASVEIDDALYSRQRYVLGDTAMQKMAKSHVFLSGMGGLGLEIAKNLVLAGIKAVTIHDTEKCQAWDLGTNFFLSEDDVVNKRNRAEAVLKHIAELNPYVHVTSSSVPFNETTDLSFLDKYQCVVLTEMKLPLQKKINDFCRSQCPPIKFISADVHGIWSRLFCDFGDEFEVLDTTGEEPKEIFISNITQANPGIVTCLENHPHKLETGQFLTFREINGMTGLNGSIQQITVISPFSFSIGDTTELEPYLHGGIAVQVKTPKTVFFESLERQLKHPKCLIVDFSNPEAPLEIHTAMLALDQFQEKYSRKPNVGCQQDSEELLKLATSISETLEEKPDVNADIVHWLSWTAQGFLSPLAAAVGGVASQEVLKAVTGKFSPLCQWLYLEAADIVESLGKPECEEFLPRGDRYDALRACIGDTLCQKLQNLNIFLVGCGAIGCEMLKNFALLGVGTSKEKGMITVTDPDLIEKSNLNRQFLFRPHHIQKPKSYTAADATLKINSQIKIDAHLNKVCPTTETIYNDEFYTKQDVIITALDNVEARRYVDSRCLANLRPLLDSGTMGTKGHTEVIVPHLTESYNSHRDPPEEEIPFCTLKSFPAAIEHTIQWARDKFESSFSHKPSLFNKFWQTYSSAEEVLQKIQSGHSLEGCFQVIKLLSRRPRNWSQCVELARLKFEKYFNHKALQLLHCFPLDIRLKDGSLFWQSPKRPPSPIKFDLNEPLHLSFLQNAAKLYATVYCIPFAEEDLSADALLNILSEVKIQEFKPSNKVVQTDETARKPDHVPISSEDERNAIFQLEKAILSNEATKSDLQMAVLSFEKDDDHNGHIDFITAASNLRAKMYSIEPADRFKTKRIAGKIIPAIATTTATVSGLVALEMIKVTGGYPFEAYKNCFLNLAIPIVVFTETTEVRKTKIRNGISFTIWDRWTVHGKEDFTLLDFINAVKEKYGIEPTMVVQGVKMLYVPVMPGHAKRLKLTMHKLVKPTTEKKYVDLTVSFAPDIDGDEDLPGPPVRYYFSHDTD.

The residue at position 1 (methionine 1) is an N-acetylmethionine. The disordered stretch occupies residues 1–21 (MEGSEPVAAHQGEEASCSSWG). Arginine 46 provides a ligand contact to ATP. Residue threonine 54 is modified to Phosphothreonine. The residue at position 301 (serine 301) is a Phosphoserine. ATP is bound by residues alanine 470 and aspartate 497. Mg(2+) is bound by residues aspartate 499 and glutamate 502. ATP is bound by residues asparagine 505, arginine 508, glutamine 509, and lysine 521. Lysine 544 is subject to N6-acetyllysine. Position 545 (valine 545) interacts with ATP. Aspartate 569 contacts Mg(2+). Asparagine 570 lines the ATP pocket. Catalysis depends on cysteine 625, which acts as the Glycyl thioester intermediate. Residue lysine 729 is modified to N6-acetyllysine. Serine 737 carries the post-translational modification Phosphoserine.

The protein belongs to the ubiquitin-activating E1 family. As to quaternary structure, forms a thioester with UBD in cells stimulated with tumor necrosis factor-alpha (TNFa) and interferon-gamma (IFNg). In terms of tissue distribution, widely expressed. Isoform 2 is predominantly expressed in testis with higher expression in adult testis than in fetal testis.

It catalyses the reaction ATP + ubiquitin + [E1 ubiquitin-activating enzyme]-L-cysteine = AMP + diphosphate + S-ubiquitinyl-[E1 ubiquitin-activating enzyme]-L-cysteine.. It functions in the pathway protein modification; protein ubiquitination. Its function is as follows. Activates ubiquitin by first adenylating its C-terminal glycine residue with ATP, and thereafter linking this residue to the side chain of a cysteine residue in E1, yielding a ubiquitin-E1 thioester and free AMP. Specific for ubiquitin, does not activate ubiquitin-like peptides. Also activates UBD/FAT10 conjugation via adenylation of its C-terminal glycine. Differs from UBE1 in its specificity for substrate E2 charging. Does not charge cell cycle E2s, such as CDC34. Essential for embryonic development. Isoform 2 may play a key role in ubiquitin system and may influence spermatogenesis and male fertility. This chain is Ubiquitin-like modifier-activating enzyme 6 (UBA6), found in Homo sapiens (Human).